The chain runs to 146 residues: CysO-cysteine peptidase (146 aa).

Residues 11 to 134 (LVIRADLVNA…LRSYRIVDGA (124 aa)) form the MPN domain. Residues His-88, His-90, and Asp-101 each coordinate Zn(2+). The JAMM motif signature appears at 88–101 (HSHTATEAYPSRTD).

This sequence belongs to the peptidase M67A family. Requires Zn(2+) as cofactor.

The catalysed reaction is [CysO sulfur-carrier protein]-Gly-NH-CH2-C(O)-S-L-Cys + H2O = [CysO sulfur-carrier protein]-C-terminal Gly-Gly + L-cysteine + H(+). The protein operates within amino-acid biosynthesis; L-cysteine biosynthesis. Functionally, protease that hydrolyzes the covalent CysO-cysteine adduct synthesized by CysM to release L-cysteine and regenerate CysO. The chain is CysO-cysteine peptidase (mec) from Mycobacterium bovis (strain ATCC BAA-935 / AF2122/97).